The chain runs to 121 residues: DNA-directed RNA polymerase subunit omega (121 aa).

The disordered stretch occupies residues 95–121 (DGDAANDLQGEEDDLGLGLDEAEDLGF). Residues 103–121 (QGEEDDLGLGLDEAEDLGF) show a composition bias toward acidic residues.

The protein belongs to the RNA polymerase subunit omega family. The RNAP catalytic core consists of 2 alpha, 1 beta, 1 beta' and 1 omega subunit. When a sigma factor is associated with the core the holoenzyme is formed, which can initiate transcription.

It catalyses the reaction RNA(n) + a ribonucleoside 5'-triphosphate = RNA(n+1) + diphosphate. Its function is as follows. Promotes RNA polymerase assembly. Latches the N- and C-terminal regions of the beta' subunit thereby facilitating its interaction with the beta and alpha subunits. This is DNA-directed RNA polymerase subunit omega from Magnetococcus marinus (strain ATCC BAA-1437 / JCM 17883 / MC-1).